The sequence spans 512 residues: ATP synthase subunit alpha (512 aa).

169–176 (GDRQTGKT) is a binding site for ATP.

This sequence belongs to the ATPase alpha/beta chains family. F-type ATPases have 2 components, CF(1) - the catalytic core - and CF(0) - the membrane proton channel. CF(1) has five subunits: alpha(3), beta(3), gamma(1), delta(1), epsilon(1). CF(0) has three main subunits: a(1), b(2) and c(9-12). The alpha and beta chains form an alternating ring which encloses part of the gamma chain. CF(1) is attached to CF(0) by a central stalk formed by the gamma and epsilon chains, while a peripheral stalk is formed by the delta and b chains.

The protein resides in the cell inner membrane. The catalysed reaction is ATP + H2O + 4 H(+)(in) = ADP + phosphate + 5 H(+)(out). Its function is as follows. Produces ATP from ADP in the presence of a proton gradient across the membrane. The alpha chain is a regulatory subunit. The protein is ATP synthase subunit alpha of Rickettsia canadensis (strain McKiel).